Reading from the N-terminus, the 253-residue chain is Sulfate transporter CysZ (253 aa).

4 helical membrane-spanning segments follow: residues 31-51, 75-95, 151-171, and 222-242; these read FVIL…WWLF, LLWP…FSTI, IVLL…PVLW, and IPVL…AMWV.

The protein belongs to the CysZ family.

The protein localises to the cell inner membrane. Functionally, high affinity, high specificity proton-dependent sulfate transporter, which mediates sulfate uptake. Provides the sulfur source for the cysteine synthesis pathway. The sequence is that of Sulfate transporter CysZ from Citrobacter koseri (strain ATCC BAA-895 / CDC 4225-83 / SGSC4696).